Reading from the N-terminus, the 128-residue chain is 3-aminoacrylate deaminase RutC (128 aa).

The protein belongs to the RutC family. As to quaternary structure, homotrimer.

It catalyses the reaction (Z)-3-aminoacrylate + H2O + H(+) = 3-oxopropanoate + NH4(+). Involved in pyrimidine catabolism. Catalyzes the deamination of 3-aminoacrylate to malonic semialdehyde, a reaction that can also occur spontaneously. RutC may facilitate the reaction and modulate the metabolic fitness, rather than catalyzing essential functions. The sequence is that of 3-aminoacrylate deaminase RutC from Escherichia coli O111:H- (strain 11128 / EHEC).